Consider the following 423-residue polypeptide: E3 ubiquitin-protein ligase makorin-2 (423 aa).

2 consecutive C3H1-type zinc fingers follow at residues 2-29 (STKQ…HDLN) and 31-58 (SKPS…HIKP). Positions 59-90 (SSRGGGGGAPEDQAGGGGAGGGGAGIGGAGGG) are disordered. Residues 61–90 (RGGGGGAPEDQAGGGGAGGGGAGIGGAGGG) show a composition bias toward gly residues. The C3H1-type 3 zinc finger occupies 162-189 (QNLPQLCPYAANGHCFYEENCTYLHGDL). The tract at residues 190–219 (CEVCGLQVLHPHDSEQRRAHEKMCLAAFEA) is makorin-type Cys-His. Residues 235 to 289 (CSICMEVVVQKANPSDRRFGILSSCCHTFCLACIRKWRCTRTFSNTIIKSCPECR) form an RING-type zinc finger. The C3H1-type 4 zinc finger occupies 318–347 (GVSKKACKYFDQGRGSCPFGGKCLYLHAFP).

It is found in the cytoplasm. The protein resides in the nucleus. It carries out the reaction S-ubiquitinyl-[E2 ubiquitin-conjugating enzyme]-L-cysteine + [acceptor protein]-L-lysine = [E2 ubiquitin-conjugating enzyme]-L-cysteine + N(6)-ubiquitinyl-[acceptor protein]-L-lysine.. It functions in the pathway protein modification; protein ubiquitination. Its function is as follows. E3 ubiquitin ligase catalyzing the covalent attachment of ubiquitin moieties onto substrate proteins. Inhibits neurogenesis and axis formation during embryonic development by modulating the phosphatidylinositol 3-kinase (PI3K) pathway. Acts downstream of PI3K and akt1 to up-regulate gsk3b mRNA expression. The protein is E3 ubiquitin-protein ligase makorin-2 (mkrn2) of Seriola quinqueradiata (Five-ray yellowtail).